Reading from the N-terminus, the 1894-residue chain is Plexin-A2 (1894 aa).

The first 34 residues, 1-34 (MEQRRFYLRAMQADNLSVVLLSVAWLLLARGTTG), serve as a signal peptide directing secretion. 2 N-linked (GlcNAc...) asparagine glycosylation sites follow: Asn-15 and Asn-76. The 474-residue stretch at 35-508 (MPQYSTFHSE…SERQVTRVPV (474 aa)) folds into the Sema domain. At 35–1237 (MPQYSTFHSE…VISDSLLTLP (1203 aa)) the chain is on the extracellular side. 2 disulfide bridges follow: Cys-94–Cys-103 and Cys-129–Cys-137. N-linked (GlcNAc...) asparagine glycosylation is found at Asn-163 and Asn-327. Disulfide bonds link Cys-284–Cys-405, Cys-300–Cys-356, Cys-374–Cys-393, Cys-511–Cys-528, Cys-517–Cys-559, Cys-520–Cys-537, Cys-531–Cys-543, and Cys-594–Cys-613. N-linked (GlcNAc...) asparagine glycosylation is found at Asn-598, Asn-696, and Asn-756. IPT/TIG domains are found at residues 858-951 (PQIT…QYTF), 954-1037 (PSVL…QFEY), 1041-1139 (PRVQ…KFIY), and 1143-1228 (PTFE…SVSV). Residues Asn-1180 and Asn-1205 are each glycosylated (N-linked (GlcNAc...) asparagine). Residues 1238 to 1258 (AIISIAAGGSLLLIIVIIVLI) traverse the membrane as a helical segment. Residues 1259–1894 (AYKRKSREND…HLINAMSIES (636 aa)) are Cytoplasmic-facing. A coiled-coil region spans residues 1261-1310 (KRKSRENDLTLKRLQMQMDNLESRVALECKEAFAELQTDINELTSDLDRS). Position 1612 is a phosphoserine (Ser-1612).

This sequence belongs to the plexin family. As to quaternary structure, homodimer. Interacts with RND1. Interacts directly with NRP1 and NRP2. The PLXNA2 homodimer interacts with a SEMA6A homodimer, giving rise to a heterotetramer.

It localises to the cell membrane. Coreceptor for SEMA3A and SEMA6A. Necessary for signaling by SEMA6A and class 3 semaphorins and subsequent remodeling of the cytoskeleton. Plays a role in axon guidance, invasive growth and cell migration. Class 3 semaphorins bind to a complex composed of a neuropilin and a plexin. The plexin modulates the affinity of the complex for specific semaphorins, and its cytoplasmic domain is required for the activation of down-stream signaling events in the cytoplasm. The sequence is that of Plexin-A2 (Plxna2) from Mus musculus (Mouse).